The primary structure comprises 531 residues: Polypyrimidine tract-binding protein 2 (531 aa).

At M1 the chain carries N-acetylmethionine. Phosphoserine occurs at positions 26 and 27. 2 RRM domains span residues 59-133 (RVLH…YSNH) and 181-257 (LRII…FSKL). Position 308 is a phosphoserine (S308). RRM domains follow at residues 338–412 (TVLL…LSKH) and 455–529 (ATLH…FSKS).

As to quaternary structure, monomer. Interacts with NOVA1; the interaction is direct. Identified in a mRNP complex, at least composed of DHX9, DDX3X, ELAVL1, HNRNPU, IGF2BP1, ILF3, PABPC1, PCBP2, PTBP2, STAU1, STAU2, SYNCRIP and YBX1. Part of a ternary complex containing KHSRP and HNRPH1. Interacts with NOVA2; the interaction is direct.

It localises to the nucleus. In terms of biological role, RNA-binding protein which binds to intronic polypyrimidine tracts and mediates negative regulation of exons splicing. May antagonize in a tissue-specific manner the ability of NOVA1 to activate exon selection. In addition to its function in pre-mRNA splicing, plays also a role in the regulation of translation. The protein is Polypyrimidine tract-binding protein 2 of Rattus norvegicus (Rat).